A 349-amino-acid chain; its full sequence is Bifunctional nitrilase/nitrile hydratase NIT4A (349 aa).

One can recognise a CN hydrolase domain in the interval valine 29 to leucine 301. Residue glutamate 69 is the Proton acceptor of the active site. The active site involves lysine 156. Cysteine 190 serves as the catalytic Nucleophile.

Belongs to the carbon-nitrogen hydrolase superfamily. Nitrilase family. Ubiquitous.

It carries out the reaction L-asparagine = 3-cyano-L-alanine + H2O. The enzyme catalyses 3-cyano-L-alanine + 2 H2O = L-aspartate + NH4(+). Involved in the cyanide detoxification pathway. Has nitrilase and nitrile-hydratase activity in the ratio 4.0:1, producing both asparagine and aspartic acid from beta-cyano-L-alanine (Ala(CN)). Can also use 3-phenylpropionitrile as substrate, but not indole-3-acetonitrile. This chain is Bifunctional nitrilase/nitrile hydratase NIT4A (NIT4A), found in Lupinus angustifolius (Narrow-leaved blue lupine).